Here is a 629-residue protein sequence, read N- to C-terminus: Polyadenylate-binding protein, cytoplasmic and nuclear (629 aa).

Residues 1–47 (MTLENKAEASPATKEETTTEAAPAEGEAKTESSEEKGSKEDQGDNAS) form a disordered region. Basic and acidic residues predominate over residues 26 to 42 (GEAKTESSEEKGSKEDQ). RRM domains follow at residues 46-124 (ASLY…WSQR), 134-211 (GNIY…PHVP), 227-304 (TNVF…RAKK), and 330-407 (VNLY…LAQR). Residues 465-543 (GANPQMMMRP…RRKDGESRVA (79 aa)) form a disordered region. Low complexity-rich tracts occupy residues 493–506 (MYGA…QGGF) and 514–531 (GGQP…QFRG). The PABC domain occupies 542–624 (VADSISNALE…AITAYNEYLN (83 aa)).

The protein belongs to the polyadenylate-binding protein type-1 family.

The protein localises to the cytoplasm. The protein resides in the nucleus. Binds the poly(A) tail of mRNA. Appears to be an important mediator of the multiple roles of the poly(A) tail in mRNA biogenesis, stability and translation. In the nucleus, involved in both mRNA cleavage and polyadenylation. Is also required for efficient mRNA export to the cytoplasm. Acts in concert with a poly(A)-specific nuclease (PAN) to affect poly(A) tail shortening, which may occur concomitantly with either nucleocytoplasmic mRNA transport or translational initiation. In the cytoplasm, stimulates translation initiation and regulates mRNA decay through translation termination-coupled poly(A) shortening, probably mediated by PAN. This Yarrowia lipolytica (strain CLIB 122 / E 150) (Yeast) protein is Polyadenylate-binding protein, cytoplasmic and nuclear (PAB1).